The sequence spans 308 residues: Apolipoprotein E (308 aa).

The first 18 residues, 1–18, serve as a signal peptide directing secretion; it reads MKFLWAALVVTLLAGCRA. A run of 8 repeats spans residues 75 to 96, 97 to 118, 119 to 140, 141 to 162, 163 to 184, 185 to 206, 207 to 224, and 225 to 246. Residues 75–246 are 8 X 22 AA approximate tandem repeats; that stretch reads LLIEETMKEV…RLDDMRDQME (172 aa). Residues 153 to 163 are LDL and other lipoprotein receptors binding; sequence HLRKLRKRLLR. 157–160 contacts heparin; it reads LRKR. Residues 205 to 281 form a lipid-binding and lipoprotein association region; that stretch reads AIPPSQQLRE…SWFEPLVQDM (77 aa). A heparin-binding site is contributed by 220–227; the sequence is GQKVRGRL. The homooligomerization stretch occupies residues 257–308; the sequence is SQVRLQAEAFQTRLKSWFEPLVQDMQRQWASLVEKVQSTLGISPSTKPSKTK. The interval 269–281 is specificity for association with VLDL; that stretch reads RLKSWFEPLVQDM.

Belongs to the apolipoprotein A1/A4/E family. Homotetramer. May interact with ABCA1; functionally associated with ABCA1 in the biogenesis of HDLs. May interact with APP/A4 amyloid-beta peptide; the interaction is extremely stable in vitro but its physiological significance is unclear. May interact with MAPT. May interact with MAP2. In the cerebrospinal fluid, interacts with secreted SORL1. Interacts with PMEL; this allows the loading of PMEL luminal fragment on ILVs to induce fibril nucleation. Post-translationally, APOE exists as multiple glycosylated and sialylated glycoforms within cells and in plasma. The extent of glycosylation and sialylation are tissue and context specific. Glycated in plasma VLDL. In terms of processing, phosphorylated by FAM20C in the extracellular medium.

It localises to the secreted. It is found in the extracellular space. The protein resides in the extracellular matrix. The protein localises to the extracellular vesicle. Its subcellular location is the endosome. It localises to the multivesicular body. Its function is as follows. APOE is an apolipoprotein, a protein associating with lipid particles, that mainly functions in lipoprotein-mediated lipid transport between organs via the plasma and interstitial fluids. APOE is a core component of plasma lipoproteins and is involved in their production, conversion and clearance. Apolipoproteins are amphipathic molecules that interact both with lipids of the lipoprotein particle core and the aqueous environment of the plasma. As such, APOE associates with chylomicrons, chylomicron remnants, very low density lipoproteins (VLDL) and intermediate density lipoproteins (IDL) but shows a preferential binding to high-density lipoproteins (HDL). It also binds a wide range of cellular receptors including the LDL receptor/LDLR and the very low-density lipoprotein receptor/VLDLR that mediate the cellular uptake of the APOE-containing lipoprotein particles. Finally, APOE also has a heparin-binding activity and binds heparan-sulfate proteoglycans on the surface of cells, a property that supports the capture and the receptor-mediated uptake of APOE-containing lipoproteins by cells. This is Apolipoprotein E (APOE) from Pteropus vampyrus (Large flying fox).